The chain runs to 408 residues: LL-diaminopimelate aminotransferase (408 aa).

Substrate contacts are provided by Tyr15 and Gly42. Residues Tyr72, 108–109 (SK), Tyr132, Asn187, Tyr218, and 246–248 (SFS) each bind pyridoxal 5'-phosphate. Substrate contacts are provided by Lys109, Tyr132, and Asn187. Position 249 is an N6-(pyridoxal phosphate)lysine (Lys249). The pyridoxal 5'-phosphate site is built by Arg257 and Asn292. 2 residues coordinate substrate: Asn292 and Arg388.

Belongs to the class-I pyridoxal-phosphate-dependent aminotransferase family. LL-diaminopimelate aminotransferase subfamily. In terms of assembly, homodimer. It depends on pyridoxal 5'-phosphate as a cofactor.

The catalysed reaction is (2S,6S)-2,6-diaminopimelate + 2-oxoglutarate = (S)-2,3,4,5-tetrahydrodipicolinate + L-glutamate + H2O + H(+). It participates in amino-acid biosynthesis; L-lysine biosynthesis via DAP pathway; LL-2,6-diaminopimelate from (S)-tetrahydrodipicolinate (aminotransferase route): step 1/1. Functionally, involved in the synthesis of meso-diaminopimelate (m-DAP or DL-DAP), required for both lysine and peptidoglycan biosynthesis. Catalyzes the direct conversion of tetrahydrodipicolinate to LL-diaminopimelate. The polypeptide is LL-diaminopimelate aminotransferase (Leptospira interrogans serogroup Icterohaemorrhagiae serovar Lai (strain 56601)).